Consider the following 95-residue polypeptide: Large ribosomal subunit protein eL37z (95 aa).

Residues cysteine 19, cysteine 22, cysteine 34, and cysteine 37 each coordinate Zn(2+). Residues 19-37 form a C4-type zinc finger; the sequence is CVRCGRRSFHIQKSRCSAC.

This sequence belongs to the eukaryotic ribosomal protein eL37 family. Requires Zn(2+) as cofactor.

Functionally, binds to the 23S rRNA. The chain is Large ribosomal subunit protein eL37z (RPL37A) from Arabidopsis thaliana (Mouse-ear cress).